An 855-amino-acid polypeptide reads, in one-letter code: Protein KRI1 homolog (855 aa).

Disordered regions lie at residues 47–67, 82–117, 130–196, 312–342, 424–453, and 589–855; these read VSES…VDPK, KDPC…KAKP, EHNG…KTKE, SLRR…MKEL, YDPR…CDYD, and KSLY…KKDN. Acidic residues predominate over residues 48-64; sequence SESEFDSDSSSSEEDEV. The span at 82 to 91 shows a compositional bias: basic and acidic residues; it reads KDPCIYDKGT. Residues Ser95, Ser97, Ser98, Ser137, and Ser138 each carry the phosphoserine modification. Residues 160 to 176 are compositionally biased toward basic and acidic residues; that stretch reads EEERRLKAEFRKVMNKE. Ser179 carries the post-translational modification Phosphoserine. Residues 307–362 are a coiled coil; it reads RTIEQSLRRTDDKRKEKRKELKERKDQEKQQKMKELELVKEMKRKEIDEKIRKLKA. Residues 441-452 are compositionally biased toward acidic residues; that stretch reads CEDDDFNMDCDY. Residues 609 to 619 show a composition bias toward low complexity; that stretch reads VTPAEATAPAE. Over residues 630-640 the composition is skewed to basic residues; the sequence is KSKRKRLKRKA. Composition is skewed to basic and acidic residues over residues 650–664 and 674–692; these read VLKE…KEAD and SSKK…DANQ. Composition is skewed to polar residues over residues 720-748, 756-773, and 792-805; these read VQNG…TTES, SNGN…QQRQ, and ANGT…NQKP. The segment covering 812-826 has biased composition (low complexity); the sequence is KKTNNFKAKNKQNNN. A compositionally biased stretch (basic residues) spans 842 to 855; sequence RKFHKREKYGKKDN.

Belongs to the KRI1 family.

The chain is Protein KRI1 homolog from Drosophila melanogaster (Fruit fly).